Here is a 300-residue protein sequence, read N- to C-terminus: RNA polymerase sigma factor RpoH (300 aa).

Positions 53–122 are sigma-70 factor domain-2; it reads LVTSHLRLVA…IQEYILRSWS (70 aa). The Interaction with polymerase core subunit RpoC motif lies at 77 to 80; sequence EVVS. Positions 231–282 are sigma-70 factor domain-4; it reads AMGVLNDRERRIFEARRLAEDPVTLEELSSEFDISRERVRQIEVRAFEKVQE. Positions 255 to 274 form a DNA-binding region, H-T-H motif; the sequence is LEELSSEFDISRERVRQIEV.

This sequence belongs to the sigma-70 factor family. RpoH subfamily. In terms of assembly, interacts with the RNA polymerase core enzyme.

It is found in the cytoplasm. In terms of biological role, sigma factors are initiation factors that promote the attachment of RNA polymerase to specific initiation sites and are then released. This sigma factor is involved in regulation of expression of heat shock genes. The chain is RNA polymerase sigma factor RpoH from Rhizobium radiobacter (Agrobacterium tumefaciens).